Reading from the N-terminus, the 355-residue chain is Tryptophan--tRNA ligase (355 aa).

ATP contacts are provided by residues Gln13–Thr15 and Gly21–Asn22. Positions Pro14 to Asn22 match the 'HIGH' region motif. An L-tryptophan-binding site is contributed by Asp137. ATP-binding positions include Gly149 to Asp151, Ile208, and Lys217 to Ser221. The 'KMSKS' region signature appears at Lys217–Ser221.

It belongs to the class-I aminoacyl-tRNA synthetase family. In terms of assembly, homodimer.

The protein localises to the cytoplasm. It catalyses the reaction tRNA(Trp) + L-tryptophan + ATP = L-tryptophyl-tRNA(Trp) + AMP + diphosphate + H(+). Catalyzes the attachment of tryptophan to tRNA(Trp). This is Tryptophan--tRNA ligase from Brucella melitensis biotype 1 (strain ATCC 23456 / CCUG 17765 / NCTC 10094 / 16M).